Consider the following 702-residue polypeptide: Polyribonucleotide nucleotidyltransferase (702 aa).

Residues Asp-484 and Asp-490 each coordinate Mg(2+). The KH domain maps to 551 to 610; the sequence is PHIESFKIAVEKIGALIGPGGKTVKSLSDQYRVTINTDSDGTVTVSGRDAQSVFDAKVAV. One can recognise an S1 motif domain in the interval 620–688; the sequence is GRVYQGVVKR…RMGRLNLSYI (69 aa).

Belongs to the polyribonucleotide nucleotidyltransferase family. Requires Mg(2+) as cofactor.

It localises to the cytoplasm. It catalyses the reaction RNA(n+1) + phosphate = RNA(n) + a ribonucleoside 5'-diphosphate. In terms of biological role, involved in mRNA degradation. Catalyzes the phosphorolysis of single-stranded polyribonucleotides processively in the 3'- to 5'-direction. This Treponema pallidum (strain Nichols) protein is Polyribonucleotide nucleotidyltransferase.